The following is a 358-amino-acid chain: B3 domain-containing transcription factor NGA3 (358 aa).

Over residues 1–14 the composition is skewed to polar residues; it reads MDLSLAPTTTTSSD. The interval 1–45 is disordered; it reads MDLSLAPTTTTSSDQEQDRDQELTSNIGASSSSGPSGNNNNLPMM. Low complexity predominate over residues 25-45; the sequence is SNIGASSSSGPSGNNNNLPMM. A DNA-binding region (TF-B3) is located at residues 56-162; that stretch reads FDKVVTPSDV…KLYIDWRHRP (107 aa). Residues 310–358 are disordered; that stretch reads EIGASSSSSSALRLNLSTDHDDDNDDGDDGDDDQFAKKGKSSLSLNFNP. A compositionally biased stretch (acidic residues) spans 329–342; the sequence is HDDDNDDGDDGDDD.

Its subcellular location is the nucleus. Regulates lateral organ growth. Functionally redundant with NGA1, NGA2 and NGA4. The polypeptide is B3 domain-containing transcription factor NGA3 (NGA3) (Arabidopsis thaliana (Mouse-ear cress)).